Here is a 507-residue protein sequence, read N- to C-terminus: ATP synthase subunit alpha, chloroplastic (507 aa).

170 to 177 contributes to the ATP binding site; it reads GDRQTGKT.

This sequence belongs to the ATPase alpha/beta chains family. As to quaternary structure, F-type ATPases have 2 components, CF(1) - the catalytic core - and CF(0) - the membrane proton channel. CF(1) has five subunits: alpha(3), beta(3), gamma(1), delta(1), epsilon(1). CF(0) has four main subunits: a, b, b' and c.

It localises to the plastid. The protein resides in the chloroplast thylakoid membrane. The catalysed reaction is ATP + H2O + 4 H(+)(in) = ADP + phosphate + 5 H(+)(out). Its function is as follows. Produces ATP from ADP in the presence of a proton gradient across the membrane. The alpha chain is a regulatory subunit. In Lemna minor (Common duckweed), this protein is ATP synthase subunit alpha, chloroplastic.